The primary structure comprises 215 residues: MKRRAYISEVPFDEAGSDDRNIYLTFDDGPNPHCTGQILDVLAEHRVPATFFVLGGHVKDHPDLVRRVAAEGHLVANHTMTHPDLTACDSEAIEREIKETNEAIVSACPQVAVQHIRRYGAWNADVLSRSMNAGLRPVHWSIDPRDWSRPGVDSIVDAVLAAARPGAIVLLHDGCPPDEIGNCKLTGLRDQTLSALLAIIPALHSRGFSLRSLPQ.

A NodB homology domain is found at Arg20–Arg211. Catalysis depends on Asp27, which acts as the Proton acceptor. Residues His78 and His82 each coordinate a divalent metal cation. Residue His172 is the Proton donor of the active site.

It belongs to the polysaccharide deacetylase family.

It is found in the cytoplasm. In terms of biological role, is involved in generating a small heat-stable compound (Nod), an acylated oligomer of N-acetylglucosamine, that stimulates mitosis in various plant protoplasts. The protein is Chitooligosaccharide deacetylase (nodB) of Rhizobium leguminosarum bv. trifolii.